The sequence spans 326 residues: Polycomb complex protein BMI-1-A (326 aa).

The RING-type zinc-finger motif lies at 18–57; that stretch reads CVLCGGYFIDATTIIECLHSFCKTCIVRYLETSKYCPICD. A Nuclear localization signal motif is present at residues 81-95; that stretch reads KLVPGLFKGEMKRRR. 2 disordered regions span residues 239–262 and 274–326; these read NPHT…DKAG and CIPS…ISSG. Positions 290–303 are enriched in low complexity; the sequence is ISSTINGTSSSSSS.

As to quaternary structure, component of a PRC1-like complex. Interacts with cbx4.

It is found in the nucleus. Functionally, component of a Polycomb group (PcG) multiprotein PRC1-like complex, a complex class required to maintain the transcriptionally repressive state of many genes, including Hox genes, throughout development. PcG PRC1 complex acts via chromatin remodeling and modification of histones; it mediates monoubiquitination of histone H2A 'Lys-119', rendering chromatin heritably changed in its expressibility. In the PRC1 complex, it is required to stimulate the E3 ubiquitin-protein ligase activity of rnf2. This is Polycomb complex protein BMI-1-A (bmi1a) from Xenopus laevis (African clawed frog).